The sequence spans 1801 residues: Sperm flagellar protein 2 (1801 aa).

The 105-residue stretch at 1 to 105 folds into the Calponin-homology (CH) domain; sequence MSEILCQWLN…LLYQLYIALQ (105 aa). Coiled coils occupy residues 176 to 260 and 321 to 395; these read EKFE…KDLQ and AHEA…TKQA. A disordered region spans residues 632–659; sequence QDKNELTDTQVPGEAAPQKEGTKSSDFE. Coiled-coil stretches lie at residues 722–748 and 869–895; these read NQAKLLEEALTGYKRKSLQLKKKKAQM and ATEVSNKKIKVEKKLEEKETEKKSAVS. 2 stretches are compositionally biased toward basic and acidic residues: residues 883–892 and 909–918; these read LEEKETEKKS and EAEKEKEVHQ. Residues 883–949 form a disordered region; it reads LEEKETEKKS…KISVKKSPID (67 aa). Residues 1051–1077 are a coiled coil; sequence EDLWEDEETKAELHQRVNDLRDRLWDI. Composition is skewed to basic and acidic residues over residues 1233-1250 and 1261-1295; these read RLAEEEKEQPQLDPKEKS and KEKEQAKKEKEQAKKEKEQAKKEKEPPKKKMAEKK. 3 disordered regions span residues 1233–1304, 1651–1695, and 1781–1801; these read RLAE…SPVV, KTSI…NANT, and SEHAQGSDGERSPSRLTDEKK. Residues 1252 to 1286 adopt a coiled-coil conformation; the sequence is QSGTNKKAKKEKEQAKKEKEQAKKEKEQAKKEKEP. The tract at residues 1305 to 1657 is interaction with IFT20; it reads EVSPVTITPE…TAEKTSISSV (353 aa). Residues 1665–1695 are a coiled coil; that stretch reads EAEENSTREELKEEKDERDQKEEEIPENANT. The segment covering 1669 to 1687 has biased composition (basic and acidic residues); it reads NSTREELKEEKDERDQKEE.

In terms of assembly, interacts (via C-terminus) with IFT20. Interacts with DYNC1I2. In terms of tissue distribution, predominantly expressed in ciliated tissues such as lung, trachea, testis, brain, and at lower levels in kidney and spleen.

The protein resides in the cell projection. The protein localises to the cilium. It is found in the flagellum. It localises to the cytoplasm. Its subcellular location is the golgi apparatus. Required for correct axoneme development in spermatozoa. Important for normal development of the manchette and sperm head morphology. Essential for male fertility. Plays a role in localization of the intraflagellar transport protein IFT20 to the manchette, suggesting function as an adapter for dynein-mediated protein transport during spermatogenesis. Also plays a role in bone growth where it seems to be required for normal osteoblast differentiation. In Rattus norvegicus (Rat), this protein is Sperm flagellar protein 2 (Spef2).